Here is a 396-residue protein sequence, read N- to C-terminus: Argininosuccinate synthase (396 aa).

9 to 17 (AFSGGLDTT) serves as a coordination point for ATP. Position 86 (Tyr-86) interacts with L-citrulline. Gly-116 contacts ATP. Residues Thr-118, Asn-122, and Asp-123 each coordinate L-aspartate. Asn-122 contacts L-citrulline. Residues Arg-126, Ser-172, Ser-181, Glu-254, and Tyr-266 each coordinate L-citrulline.

This sequence belongs to the argininosuccinate synthase family. Type 1 subfamily. Homotetramer.

The protein localises to the cytoplasm. It carries out the reaction L-citrulline + L-aspartate + ATP = 2-(N(omega)-L-arginino)succinate + AMP + diphosphate + H(+). Its pathway is amino-acid biosynthesis; L-arginine biosynthesis; L-arginine from L-ornithine and carbamoyl phosphate: step 2/3. This is Argininosuccinate synthase from Halobacterium salinarum (strain ATCC 700922 / JCM 11081 / NRC-1) (Halobacterium halobium).